The sequence spans 1400 residues: DNA-directed RNA polymerase subunit beta' (1400 aa).

C71, C73, C86, and C89 together coordinate Zn(2+). Residues D462, D464, and D466 each coordinate Mg(2+). Positions 810, 884, 891, and 894 each coordinate Zn(2+).

It belongs to the RNA polymerase beta' chain family. In terms of assembly, the RNAP catalytic core consists of 2 alpha, 1 beta, 1 beta' and 1 omega subunit. When a sigma factor is associated with the core the holoenzyme is formed, which can initiate transcription. Mg(2+) serves as cofactor. Requires Zn(2+) as cofactor.

It catalyses the reaction RNA(n) + a ribonucleoside 5'-triphosphate = RNA(n+1) + diphosphate. Functionally, DNA-dependent RNA polymerase catalyzes the transcription of DNA into RNA using the four ribonucleoside triphosphates as substrates. The polypeptide is DNA-directed RNA polymerase subunit beta' (Rhodopseudomonas palustris (strain BisA53)).